A 288-amino-acid chain; its full sequence is ATP synthase subunit a (288 aa).

6 helical membrane passes run 47-67 (LDSMLWSIGLGIVFCAIFWMV), 104-124 (LIAPLALTIFVWIFLMNLMDL), 157-177 (DPNITLGMSFSVFILILFYSI), 199-219 (PIVQIILIPINFILEFVTLIA), 237-257 (LIFILIALMPFWIQWALSVPW), and 258-278 (AIFHILIITLQAFVFMMLTIV).

This sequence belongs to the ATPase A chain family. In terms of assembly, F-type ATPases have 2 components, CF(1) - the catalytic core - and CF(0) - the membrane proton channel. CF(1) has five subunits: alpha(3), beta(3), gamma(1), delta(1), epsilon(1). CF(0) has three main subunits: a(1), b(2) and c(9-12). The alpha and beta chains form an alternating ring which encloses part of the gamma chain. CF(1) is attached to CF(0) by a central stalk formed by the gamma and epsilon chains, while a peripheral stalk is formed by the delta and b chains.

Its subcellular location is the cell inner membrane. Its function is as follows. Key component of the proton channel; it plays a direct role in the translocation of protons across the membrane. The chain is ATP synthase subunit a from Psychrobacter arcticus (strain DSM 17307 / VKM B-2377 / 273-4).